A 427-amino-acid polypeptide reads, in one-letter code: Glutamate-1-semialdehyde 2,1-aminomutase (427 aa).

At Lys-265 the chain carries N6-(pyridoxal phosphate)lysine.

The protein belongs to the class-III pyridoxal-phosphate-dependent aminotransferase family. HemL subfamily. Homodimer. It depends on pyridoxal 5'-phosphate as a cofactor.

It localises to the cytoplasm. It carries out the reaction (S)-4-amino-5-oxopentanoate = 5-aminolevulinate. It functions in the pathway porphyrin-containing compound metabolism; protoporphyrin-IX biosynthesis; 5-aminolevulinate from L-glutamyl-tRNA(Glu): step 2/2. The polypeptide is Glutamate-1-semialdehyde 2,1-aminomutase (Nitratiruptor sp. (strain SB155-2)).